We begin with the raw amino-acid sequence, 197 residues long: CASP-like protein 1B2 (197 aa).

Position 2 is an N-acetylalanine (A2). The Cytoplasmic portion of the chain corresponds to 2–17 (AREKIVVAGGTTKSWK). The helical transmembrane segment at 18-38 (LLLGLRIFAFMATLAAAIVMS) threads the bilayer. Residues 39-69 (LNKETKTLVVATIGTVPIKATLTAKFQHTPA) lie on the Extracellular side of the membrane. Residues 70-90 (FVFFVIANVMVSFHNLLMIVV) traverse the membrane as a helical segment. At 91–106 (QIFSRKLEYKGLRLLS) the chain is on the cytoplasmic side. The chain crosses the membrane as a helical span at residues 107–127 (IAILDMLNATLVSAAANAAVF). Residues 128-156 (VAELGKNGNKHAKWNKVCDRFTTYCDHGA) lie on the Extracellular side of the membrane. The chain crosses the membrane as a helical span at residues 157-177 (GAIIAAFAGVILMLLVSAVSI). At 178–197 (SRLLINSKNFSTTATTTSVV) the chain is on the cytoplasmic side.

It belongs to the Casparian strip membrane proteins (CASP) family. As to quaternary structure, homodimer and heterodimers.

It is found in the cell membrane. This chain is CASP-like protein 1B2, found in Arabidopsis thaliana (Mouse-ear cress).